A 215-amino-acid polypeptide reads, in one-letter code: MKAYQREFIEFALERQVLRFGEFTLKSGRISPYFFNAGLFNTGRDLARLGRFYAAALVDSGIDYDLLFGPAYKGIPIATTTAVALCEHHNIDIPYCFNRKEKKDHGEGGSLVGSELKGRVMLVDDVITAGTAIRESMEIIEAHQAQLAGVLIALDRQEKGKGELSAIQEVERDFGCGIVAIIKLADLISYLSEKPRMEAQLAAVSQYREQYGIEA.

Residue Lys-26 participates in 5-phospho-alpha-D-ribose 1-diphosphate binding. 34 to 35 (FF) serves as a coordination point for orotate. 5-phospho-alpha-D-ribose 1-diphosphate-binding positions include 72 to 73 (YK), Arg-99, Lys-100, Lys-103, His-105, and 124 to 132 (DDVITAGTA). Residues Thr-128 and Arg-156 each contribute to the orotate site.

It belongs to the purine/pyrimidine phosphoribosyltransferase family. PyrE subfamily. Homodimer. Mg(2+) serves as cofactor.

It catalyses the reaction orotidine 5'-phosphate + diphosphate = orotate + 5-phospho-alpha-D-ribose 1-diphosphate. It participates in pyrimidine metabolism; UMP biosynthesis via de novo pathway; UMP from orotate: step 1/2. Catalyzes the transfer of a ribosyl phosphate group from 5-phosphoribose 1-diphosphate to orotate, leading to the formation of orotidine monophosphate (OMP). In Shewanella oneidensis (strain ATCC 700550 / JCM 31522 / CIP 106686 / LMG 19005 / NCIMB 14063 / MR-1), this protein is Orotate phosphoribosyltransferase.